A 346-amino-acid chain; its full sequence is Phosphoribosylformylglycinamidine cyclo-ligase (346 aa).

This sequence belongs to the AIR synthase family.

It localises to the cytoplasm. It carries out the reaction 2-formamido-N(1)-(5-O-phospho-beta-D-ribosyl)acetamidine + ATP = 5-amino-1-(5-phospho-beta-D-ribosyl)imidazole + ADP + phosphate + H(+). The protein operates within purine metabolism; IMP biosynthesis via de novo pathway; 5-amino-1-(5-phospho-D-ribosyl)imidazole from N(2)-formyl-N(1)-(5-phospho-D-ribosyl)glycinamide: step 2/2. The sequence is that of Phosphoribosylformylglycinamidine cyclo-ligase from Erwinia tasmaniensis (strain DSM 17950 / CFBP 7177 / CIP 109463 / NCPPB 4357 / Et1/99).